The sequence spans 830 residues: Ent-cassa-12,15-diene synthase (830 aa).

The interval 1–50 is disordered; it reads MMLLGSPSSGGYGGKFAGASPAGGTTTMAPSAKQPSSRAPPPGITGGRND. A compositionally biased stretch (polar residues) spans 23–37; the sequence is GGTTTMAPSAKQPSS. Mg(2+) is bound by residues D577, D581, N721, and E729. The short motif at 577–581 is the DDXXD motif element; sequence DDLFD.

This sequence belongs to the terpene synthase family. Mg(2+) serves as cofactor. Expressed in roots and stems.

The catalysed reaction is ent-copalyl diphosphate = ent-cassa-12,15-diene + diphosphate. Functionally, involved in phytocassane phytoalexins biosynthesis. Catalyzes the conversion of ent-copalyl diphosphate to the phytoalexin precursor ent-cassa-12,15-diene. This chain is Ent-cassa-12,15-diene synthase (KSL7), found in Oryza sativa subsp. indica (Rice).